Reading from the N-terminus, the 190-residue chain is Ribonuclease HII (190 aa).

An RNase H type-2 domain is found at 1 to 190 (MAGVDEVGRG…FCRKIIENPD (190 aa)). 3 residues coordinate a divalent metal cation: Asp5, Glu6, and Asp101.

It belongs to the RNase HII family. It depends on Mn(2+) as a cofactor. Mg(2+) serves as cofactor.

It is found in the cytoplasm. It carries out the reaction Endonucleolytic cleavage to 5'-phosphomonoester.. In terms of biological role, endonuclease that specifically degrades the RNA of RNA-DNA hybrids. This chain is Ribonuclease HII (rnhB), found in Synechocystis sp. (strain ATCC 27184 / PCC 6803 / Kazusa).